A 247-amino-acid polypeptide reads, in one-letter code: Carboxy-S-adenosyl-L-methionine synthase (247 aa).

S-adenosyl-L-methionine-binding positions include Tyr-40, 65-67 (GCS), 90-91 (DN), 122-123 (DI), Asn-137, and Arg-204.

The protein belongs to the class I-like SAM-binding methyltransferase superfamily. Cx-SAM synthase family. Homodimer.

It carries out the reaction prephenate + S-adenosyl-L-methionine = carboxy-S-adenosyl-L-methionine + 3-phenylpyruvate + H2O. Functionally, catalyzes the conversion of S-adenosyl-L-methionine (SAM) to carboxy-S-adenosyl-L-methionine (Cx-SAM). This is Carboxy-S-adenosyl-L-methionine synthase from Stutzerimonas stutzeri (strain A1501) (Pseudomonas stutzeri).